We begin with the raw amino-acid sequence, 401 residues long: Argininosuccinate synthase (401 aa).

Residues 10–18 and Ala38 contribute to the ATP site; that span reads AYSGGVDTS. L-citrulline is bound at residue Tyr89. Gly119 lines the ATP pocket. L-aspartate is bound by residues Thr121, Asn125, and Asp126. L-citrulline is bound at residue Asn125. 5 residues coordinate L-citrulline: Arg129, Ser177, Ser186, Glu262, and Tyr274.

Belongs to the argininosuccinate synthase family. Type 1 subfamily. In terms of assembly, homotetramer.

Its subcellular location is the cytoplasm. It carries out the reaction L-citrulline + L-aspartate + ATP = 2-(N(omega)-L-arginino)succinate + AMP + diphosphate + H(+). It participates in amino-acid biosynthesis; L-arginine biosynthesis; L-arginine from L-ornithine and carbamoyl phosphate: step 2/3. This Synechococcus sp. (strain CC9311) protein is Argininosuccinate synthase.